We begin with the raw amino-acid sequence, 582 residues long: L-fucose isomerase (582 aa).

Residues glutamate 333 and aspartate 357 each act as proton acceptor in the active site. Glutamate 333, aspartate 357, and histidine 520 together coordinate Mn(2+).

The protein belongs to the L-fucose isomerase family. Requires Mn(2+) as cofactor.

Its subcellular location is the cytoplasm. It carries out the reaction L-fucose = L-fuculose. Its pathway is carbohydrate degradation; L-fucose degradation; L-lactaldehyde and glycerone phosphate from L-fucose: step 1/3. Functionally, converts the aldose L-fucose into the corresponding ketose L-fuculose. In Vibrio vulnificus (strain YJ016), this protein is L-fucose isomerase.